The following is a 99-amino-acid chain: MAATQEEIIAGLAEIIEEVTGIEPSEVTPEKSFVDDLDIDSLSMVEIAVQTEDKYGVKIPDEDLAGLRTVGDVVAYIQKLEEENPEAAAALREKFAADQ.

Residues 3–81 form the Carrier domain; it reads ATQEEIIAGL…DVVAYIQKLE (79 aa). Serine 41 is modified (O-(pantetheine 4'-phosphoryl)serine). Lysine 79 participates in a covalent cross-link: Isoglutamyl lysine isopeptide (Lys-Gln) (interchain with Q-Cter in protein Pup).

It belongs to the acyl carrier protein (ACP) family. 4'-phosphopantetheine is transferred from CoA to a specific serine of apo-AcpM.

The protein resides in the cytoplasm. Acyl carrier protein involved in meromycolate extension. This is Meromycolate extension acyl carrier protein (acpM) from Mycolicibacterium smegmatis (strain ATCC 700084 / mc(2)155) (Mycobacterium smegmatis).